A 445-amino-acid chain; its full sequence is 3-phosphoshikimate 1-carboxyvinyltransferase (445 aa).

The 3-phosphoshikimate site is built by Lys-28, Ser-29, and Arg-33. Lys-28 is a binding site for phosphoenolpyruvate. Gly-101 and Arg-129 together coordinate phosphoenolpyruvate. Residues Ser-175, Gln-177, Asp-328, and Lys-355 each coordinate 3-phosphoshikimate. Phosphoenolpyruvate is bound at residue Gln-177. Residue Asp-328 is the Proton acceptor of the active site. Residues Arg-359 and Arg-402 each coordinate phosphoenolpyruvate.

This sequence belongs to the EPSP synthase family. Monomer.

The protein resides in the cytoplasm. It catalyses the reaction 3-phosphoshikimate + phosphoenolpyruvate = 5-O-(1-carboxyvinyl)-3-phosphoshikimate + phosphate. The protein operates within metabolic intermediate biosynthesis; chorismate biosynthesis; chorismate from D-erythrose 4-phosphate and phosphoenolpyruvate: step 6/7. In terms of biological role, catalyzes the transfer of the enolpyruvyl moiety of phosphoenolpyruvate (PEP) to the 5-hydroxyl of shikimate-3-phosphate (S3P) to produce enolpyruvyl shikimate-3-phosphate and inorganic phosphate. The sequence is that of 3-phosphoshikimate 1-carboxyvinyltransferase from Bradyrhizobium sp. (strain BTAi1 / ATCC BAA-1182).